Here is a 926-residue protein sequence, read N- to C-terminus: Staphylococcal nuclease domain-containing protein 1 (926 aa).

The segment covering 1–17 (MATAANTATAAGAAKDA) has biased composition (low complexity). A disordered region spans residues 1–24 (MATAANTATAAGAAKDAPPAPTKS). TNase-like domains are found at residues 23–167 (KSLS…KWSP), 195–333 (NPVK…QWQD), 346–505 (KDFS…LHAK), and 535–674 (LRTE…IWTN). The region spanning 749–807 (TPKRGDLVAAQFTLDNQWYRAKVERVQGSNATVLYIDYGNKETLPTNRLAALPPAFSSE) is the Tudor domain. Positions 760–788 (FTLDNQWYRAKVERVQGSNATVLYIDYGN) are involved in dimethylarginine binding.

Associates with the RNA-induced silencing complex (RISC). Interacts with the RISC components AGO2, Fmr1 and vig. Interacts with piwi. As to expression, expressed in adult ovaries and testis (at protein level).

Its subcellular location is the cytoplasm. The protein localises to the nucleus. The enzyme catalyses Endonucleolytic cleavage to nucleoside 3'-phosphates and 3'-phosphooligonucleotide end-products.. Functionally, endonuclease which shows activity towards both DNA and RNA substrates. Has a role in translation regulation throught its association with the with the RNA-induced silencing complex (RISC). Plays a role in spermatogenesis probably by negatively regulating piwi expression in the germline. Together with piwi, might be involved in transposon repression in the germline. The protein is Staphylococcal nuclease domain-containing protein 1 of Drosophila melanogaster (Fruit fly).